The following is a 62-amino-acid chain: Alpha-elapitoxin-Pc1 (62 aa).

Intrachain disulfides connect cysteine 3/cysteine 24, cysteine 17/cysteine 41, cysteine 43/cysteine 54, and cysteine 55/cysteine 60.

The protein belongs to the three-finger toxin family. Short-chain subfamily. Type I alpha-neurotoxin sub-subfamily. Expressed by the venom gland.

The protein resides in the secreted. Bird-specific neurotoxin (tested on chicken) that acts as pseudo-irreversible antagonists at the nicotinic acetylcholine receptor (nAChR) of the skeletal neuromuscular junction. Has no significant effect on the electrically-induced twitches of the rat isolated phrenic nerve-diaphragm preparation. This Pseudechis colletti (Collett's snake) protein is Alpha-elapitoxin-Pc1.